Here is a 337-residue protein sequence, read N- to C-terminus: Receptor like protein kinase S.3 (337 aa).

The region spanning 50 to 316 (FKESELFGTE…VNYLEGNDVL (267 aa)) is the Protein kinase domain. ATP contacts are provided by residues 56 to 64 (FGTEANGTV) and lysine 78. Tyrosine 123 carries the phosphotyrosine modification. Residue aspartate 171 is the Proton acceptor of the active site.

The protein belongs to the protein kinase superfamily. Ser/Thr protein kinase family.

The enzyme catalyses L-seryl-[protein] + ATP = O-phospho-L-seryl-[protein] + ADP + H(+). The catalysed reaction is L-threonyl-[protein] + ATP = O-phospho-L-threonyl-[protein] + ADP + H(+). This is Receptor like protein kinase S.3 (LECRKS3) from Arabidopsis thaliana (Mouse-ear cress).